A 174-amino-acid polypeptide reads, in one-letter code: ATP synthase subunit delta (174 aa).

This sequence belongs to the ATPase delta chain family. F-type ATPases have 2 components, F(1) - the catalytic core - and F(0) - the membrane proton channel. F(1) has five subunits: alpha(3), beta(3), gamma(1), delta(1), epsilon(1). F(0) has three main subunits: a(1), b(2) and c(10-14). The alpha and beta chains form an alternating ring which encloses part of the gamma chain. F(1) is attached to F(0) by a central stalk formed by the gamma and epsilon chains, while a peripheral stalk is formed by the delta and b chains.

It is found in the cell inner membrane. Its function is as follows. F(1)F(0) ATP synthase produces ATP from ADP in the presence of a proton or sodium gradient. F-type ATPases consist of two structural domains, F(1) containing the extramembraneous catalytic core and F(0) containing the membrane proton channel, linked together by a central stalk and a peripheral stalk. During catalysis, ATP synthesis in the catalytic domain of F(1) is coupled via a rotary mechanism of the central stalk subunits to proton translocation. Functionally, this protein is part of the stalk that links CF(0) to CF(1). It either transmits conformational changes from CF(0) to CF(1) or is implicated in proton conduction. The protein is ATP synthase subunit delta of Francisella philomiragia subsp. philomiragia (strain ATCC 25017 / CCUG 19701 / FSC 153 / O#319-036).